The primary structure comprises 855 residues: Nuclear valosin-containing protein-like (855 aa).

The interaction with RPL5 stretch occupies residues 1–219 (MKPRPGVFVD…SLLESDKKRK (219 aa)). The Nucleolar localization signal motif lies at 49 to 52 (RRKR). Lysine 70 carries the N6-acetyllysine modification. The interval 83 to 234 (LAKRARQDEE…KGNKRKTENL (152 aa)) is disordered. The Nuclear localization signal signature appears at 85–88 (KRAR). The segment covering 90–110 (DEEDEYTESYSDDDSNMEDYP) has biased composition (acidic residues). Composition is skewed to polar residues over residues 113–123 (QSANPMNSSLL) and 131–157 (SESV…SKTG). The residue at position 133 (serine 133) is a Phosphoserine. Threonine 137 is subject to Phosphothreonine. Lysine 155 is modified (N6-acetyllysine). Serine 190 is modified (phosphoserine). Lysine 207 participates in a covalent cross-link: Glycyl lysine isopeptide (Lys-Gly) (interchain with G-Cter in SUMO2). Phosphoserine occurs at positions 210 and 214. Positions 217–228 (KRKGRAKGKGNK) are enriched in basic residues. A Nuclear localization signal motif is present at residues 217 to 231 (KRKGRAKGKGNKRKT). Residues 266 to 473 (VGGNDATLKE…LTPGFVGADL (208 aa)) are interaction with WDR74. ATP is bound at residue 304–311 (GPPGCGKT). The disordered stretch occupies residues 496 to 523 (QKKKPEIEGLPSEGDQEERLGAEPTSET). 621–628 (GPPGCGKT) serves as a coordination point for ATP.

Belongs to the AAA ATPase family. Interacts with NCL/nucleolin. Isoform 1 and isoform 2 interact with TERT and isoform 1 exhibits a higher binding affinity for TERT compared to isoform 2. Isoform 1 interacts with MTREX in an ATP-dependent manner; the interaction is required to associate NVL with nuclear RNA exosome. Isoform 1 interacts with RPL5 in an ATP-dependent manner. Interacts with WDR74 (through WDR repeats); the interaction is independent of RNA or pre-60S ribosome particles.

The protein localises to the nucleus. It is found in the nucleolus. Its subcellular location is the nucleoplasm. Participates in the assembly of the telomerase holoenzyme and effecting of telomerase activity via its interaction with TERT. Involved in both early and late stages of the pre-rRNA processing pathways. Spatiotemporally regulates 60S ribosomal subunit biogenesis in the nucleolus. Catalyzes the release of specific assembly factors, such as WDR74, from pre-60S ribosomal particles through the ATPase activity. This is Nuclear valosin-containing protein-like from Mus musculus (Mouse).